The following is a 404-amino-acid chain: S-adenosylmethionine synthase (404 aa).

ATP is bound at residue histidine 17. Aspartate 19 contacts Mg(2+). Residue glutamate 45 participates in K(+) binding. Residues glutamate 58 and glutamine 101 each coordinate L-methionine. Residues glutamine 101–arginine 111 form a flexible loop region. Residues aspartate 172–lysine 174, arginine 246–phenylalanine 247, aspartate 255, arginine 261–lysine 262, alanine 278, and lysine 282 contribute to the ATP site. Aspartate 255 is an L-methionine binding site. Lysine 286 provides a ligand contact to L-methionine.

This sequence belongs to the AdoMet synthase family. In terms of assembly, homotetramer; dimer of dimers. It depends on Mg(2+) as a cofactor. K(+) serves as cofactor.

It localises to the cytoplasm. The catalysed reaction is L-methionine + ATP + H2O = S-adenosyl-L-methionine + phosphate + diphosphate. Its pathway is amino-acid biosynthesis; S-adenosyl-L-methionine biosynthesis; S-adenosyl-L-methionine from L-methionine: step 1/1. In terms of biological role, catalyzes the formation of S-adenosylmethionine (AdoMet) from methionine and ATP. The overall synthetic reaction is composed of two sequential steps, AdoMet formation and the subsequent tripolyphosphate hydrolysis which occurs prior to release of AdoMet from the enzyme. The chain is S-adenosylmethionine synthase from Chlorobaculum tepidum (strain ATCC 49652 / DSM 12025 / NBRC 103806 / TLS) (Chlorobium tepidum).